Reading from the N-terminus, the 153-residue chain is Arginine regulator (153 aa).

Belongs to the ArgR family.

Its subcellular location is the cytoplasm. Its pathway is amino-acid degradation; L-arginine degradation via ADI pathway. Its function is as follows. Regulates the transcription of the arc operon, involved in arginine catabolism. The chain is Arginine regulator (argR1) from Lactiplantibacillus plantarum (strain ATCC BAA-793 / NCIMB 8826 / WCFS1) (Lactobacillus plantarum).